The following is a 471-amino-acid chain: Glutamate--tRNA ligase 1 (471 aa).

The short motif at 15-25 (PSPTGYLHIGG) is the 'HIGH' region element. The 'KMSKS' region signature appears at 243–247 (KLSKR). Lys246 contributes to the ATP binding site.

This sequence belongs to the class-I aminoacyl-tRNA synthetase family. Glutamate--tRNA ligase type 1 subfamily. Monomer.

The protein localises to the cytoplasm. The enzyme catalyses tRNA(Glu) + L-glutamate + ATP = L-glutamyl-tRNA(Glu) + AMP + diphosphate. In terms of biological role, catalyzes the attachment of glutamate to tRNA(Glu) in a two-step reaction: glutamate is first activated by ATP to form Glu-AMP and then transferred to the acceptor end of tRNA(Glu). This is Glutamate--tRNA ligase 1 from Cereibacter sphaeroides (strain ATCC 17029 / ATH 2.4.9) (Rhodobacter sphaeroides).